A 114-amino-acid chain; its full sequence is Seed trypsin/chymotrypsin inhibitor TI5-72 (114 aa).

Residues 1-28 (MELMNKKVMMKLALMVFLLSFAANVVNA) form the signal peptide. Positions 29 to 42 (RFDSTSFITQVLSN) are excised as a propeptide. Intrachain disulfides connect Cys-50–Cys-103, Cys-51–Cys-66, Cys-54–Cys-99, Cys-56–Cys-64, Cys-73–Cys-80, Cys-77–Cys-92, and Cys-82–Cys-90.

It belongs to the Bowman-Birk serine protease inhibitor family. In terms of tissue distribution, seed.

Inhibitor of trypsin and of chymotrypsin. May function as a natural phytochemical defense against predators. This is Seed trypsin/chymotrypsin inhibitor TI5-72 (TI572) from Pisum sativum (Garden pea).